We begin with the raw amino-acid sequence, 307 residues long: Hepatitis A virus cellular receptor 1 homolog (307 aa).

Positions Met1–Ser21 are cleaved as a signal peptide. An Ig-like V-type domain is found at Tyr22 to Ser124. Topologically, residues Tyr22–Gly235 are extracellular. Cystine bridges form between Cys37-Cys108, Cys49-Cys60, and Cys55-Cys107. Residues Pro129 to Thr177 are disordered. Positions Pro139 to Thr175 are enriched in low complexity. Asn206 carries N-linked (GlcNAc...) asparagine glycosylation. A helical transmembrane segment spans residues Phe236–Val256. The Cytoplasmic portion of the chain corresponds to Thr257–Glu307.

The protein belongs to the immunoglobulin superfamily. TIM family. As to quaternary structure, interacts with STAM. Interacts with SELPLG. In terms of tissue distribution, expressed at a low level in normal kidney but are increased dramatically in postischemic kidney. Expressed in proliferating bromodeoxyuridine-positive and dedifferentiated vimentin-positive epithelial cells in regenerating proximal tubules.

Its subcellular location is the cell membrane. In terms of biological role, phosphatidylserine receptor that plays an important functional role in regulatory B-cells homeostasis including generation, expansion and suppressor functions. As P-selectin/SELPLG ligand, plays a specialized role in activated but not naive T-cell trafficking during inflammatory responses. Controls thereby T-cell accumulation in the inflamed central nervous system (CNS) and the induction of autoimmune disease. Also regulates expression of various anti-inflammatory cytokines and co-inhibitory ligands including IL10. Acts as a regulator of T-cell proliferation. May play a role in kidney injury and repair. The protein is Hepatitis A virus cellular receptor 1 homolog (Havcr1) of Rattus norvegicus (Rat).